We begin with the raw amino-acid sequence, 124 residues long: Small ribosomal subunit protein uS12 (124 aa).

Asp-89 is subject to 3-methylthioaspartic acid. The disordered stretch occupies residues Thr-104–Glu-124.

It belongs to the universal ribosomal protein uS12 family. As to quaternary structure, part of the 30S ribosomal subunit. Contacts proteins S8 and S17. May interact with IF1 in the 30S initiation complex.

With S4 and S5 plays an important role in translational accuracy. In terms of biological role, interacts with and stabilizes bases of the 16S rRNA that are involved in tRNA selection in the A site and with the mRNA backbone. Located at the interface of the 30S and 50S subunits, it traverses the body of the 30S subunit contacting proteins on the other side and probably holding the rRNA structure together. The combined cluster of proteins S8, S12 and S17 appears to hold together the shoulder and platform of the 30S subunit. The chain is Small ribosomal subunit protein uS12 from Synechococcus sp. (strain CC9605).